Reading from the N-terminus, the 214-residue chain is ATP phosphoribosyltransferase (214 aa).

This sequence belongs to the ATP phosphoribosyltransferase family. Short subfamily. Heteromultimer composed of HisG and HisZ subunits.

The protein localises to the cytoplasm. It carries out the reaction 1-(5-phospho-beta-D-ribosyl)-ATP + diphosphate = 5-phospho-alpha-D-ribose 1-diphosphate + ATP. The protein operates within amino-acid biosynthesis; L-histidine biosynthesis; L-histidine from 5-phospho-alpha-D-ribose 1-diphosphate: step 1/9. Catalyzes the condensation of ATP and 5-phosphoribose 1-diphosphate to form N'-(5'-phosphoribosyl)-ATP (PR-ATP). Has a crucial role in the pathway because the rate of histidine biosynthesis seems to be controlled primarily by regulation of HisG enzymatic activity. This chain is ATP phosphoribosyltransferase, found in Leptothrix cholodnii (strain ATCC 51168 / LMG 8142 / SP-6) (Leptothrix discophora (strain SP-6)).